Consider the following 780-residue polypeptide: Translation initiation factor IF-2 (780 aa).

Residues 44-194 (RQLDNAVDGT…TPPKPKELPE (151 aa)) are disordered. Residues 53–65 (TNKKAEAPKKETT) are compositionally biased toward basic and acidic residues. Residues 66 to 81 (SNENGNSKGPNKPNMT) show a composition bias toward polar residues. 2 stretches are compositionally biased toward low complexity: residues 82–93 (NSNEKSNKPNKP) and 117–168 (ANTS…NNKG). In terms of domain architecture, tr-type G spans 281-450 (ERPPVVTIMG…LLVSEVEELK (170 aa)). Positions 290–297 (GHVDHGKT) are G1. GTP is bound at residue 290 to 297 (GHVDHGKT). Positions 315-319 (GITQH) are G2. The tract at residues 336–339 (DTPG) is G3. GTP contacts are provided by residues 336–340 (DTPGH) and 390–393 (NKID). Positions 390–393 (NKID) are G4. Residues 426–428 (SAK) are G5.

This sequence belongs to the TRAFAC class translation factor GTPase superfamily. Classic translation factor GTPase family. IF-2 subfamily.

Its subcellular location is the cytoplasm. Its function is as follows. One of the essential components for the initiation of protein synthesis. Protects formylmethionyl-tRNA from spontaneous hydrolysis and promotes its binding to the 30S ribosomal subunits. Also involved in the hydrolysis of GTP during the formation of the 70S ribosomal complex. The chain is Translation initiation factor IF-2 from Listeria welshimeri serovar 6b (strain ATCC 35897 / DSM 20650 / CCUG 15529 / CIP 8149 / NCTC 11857 / SLCC 5334 / V8).